The sequence spans 234 residues: uncharacterized protein (234 aa).

The next 3 helical transmembrane spans lie at 32–52 (GLRT…VSVL), 62–82 (IPAQ…LKEG), and 106–126 (QGLF…NIAL).

Belongs to the MgtC/SapB family.

The protein resides in the cell membrane. This is an uncharacterized protein from Synechocystis sp. (strain ATCC 27184 / PCC 6803 / Kazusa).